The sequence spans 224 residues: uncharacterized protein (224 aa).

This is an uncharacterized protein from Acanthamoeba polyphaga mimivirus (APMV).